The primary structure comprises 59 residues: Photosystem II reaction center protein K (59 aa).

The propeptide occupies 1-22; sequence MLNIFSLICLSSALHSSSFFFA. Residues 38–58 form a helical membrane-spanning segment; it reads MPVIPVLFFLLALVWQAAVSF.

It belongs to the PsbK family. In terms of assembly, PSII is composed of 1 copy each of membrane proteins PsbA, PsbB, PsbC, PsbD, PsbE, PsbF, PsbH, PsbI, PsbJ, PsbK, PsbL, PsbM, PsbT, PsbX, PsbY, PsbZ, Psb30/Ycf12, at least 3 peripheral proteins of the oxygen-evolving complex and a large number of cofactors. It forms dimeric complexes.

It localises to the plastid. The protein resides in the chloroplast thylakoid membrane. In terms of biological role, one of the components of the core complex of photosystem II (PSII). PSII is a light-driven water:plastoquinone oxidoreductase that uses light energy to abstract electrons from H(2)O, generating O(2) and a proton gradient subsequently used for ATP formation. It consists of a core antenna complex that captures photons, and an electron transfer chain that converts photonic excitation into a charge separation. The protein is Photosystem II reaction center protein K of Piper cenocladum (Ant piper).